A 518-amino-acid polypeptide reads, in one-letter code: Alpha-ionylideneethane synthase abl3 (518 aa).

2 disordered regions span residues A294 to E355 and K440 to K466. Residues T299 to D339 are compositionally biased toward low complexity.

The protein belongs to the alpha-ionylideneethane synthase family.

It functions in the pathway hormone biosynthesis. Alpha-ionylideneethane synthase involved in the biosynthesis of abscisic acid (ABA), a phytohormone that acts antagonistically toward salicylic acid (SA), jasmonic acid (JA) and ethylene (ETH) signaling, to impede plant defense responses. During pathogen-host interaction, ABA plays a dual role in disease severity by increasing plant susceptibility and accelerating pathogenesis in the fungus itself. The first step of the pathway catalyzes the reaction from farnesyl diphosphate to alpha-ionylideneethane performed by the alpha-ionylideneethane synthase ABA3 via a three-step reaction mechanism involving 2 neutral intermediates, beta-farnesene and allofarnesene. The cytochrome P450 monooxygenase ABA1 might then be involved in the conversion of alpha-ionylideneethane to alpha-ionylideneacetic acid. Alpha-ionylideneacetic acid is further converted to abscisic acid in 2 steps involving the cytochrome P450 monooxygenase ABA2 and the short-chain dehydrogenase/reductase ABA4, via the intermediates 1'-deoxy-ABA or 1',4'-trans-diol-ABA, depending on the order of action of these 2 enzymes. ABA2 is responsible for the hydroxylation of carbon atom C-1' and ABA4 might be involved in the oxidation of the C-4' carbon atom. The protein is Alpha-ionylideneethane synthase abl3 of Pyricularia oryzae (strain Y34) (Rice blast fungus).